A 308-amino-acid chain; its full sequence is Mycothiol acetyltransferase (308 aa).

N-acetyltransferase domains are found at residues 16-152 (ETLA…RPLA) and 165-308 (VTVR…RTES). E47 is a 1D-myo-inositol 2-(L-cysteinylamino)-2-deoxy-alpha-D-glucopyranoside binding site. Position 91 to 93 (91 to 93 (LVV)) interacts with acetyl-CoA. E192, K231, and E240 together coordinate 1D-myo-inositol 2-(L-cysteinylamino)-2-deoxy-alpha-D-glucopyranoside. Acetyl-CoA is bound by residues 244–246 (LGV) and 251–257 (QGGGLGK). Y278 lines the 1D-myo-inositol 2-(L-cysteinylamino)-2-deoxy-alpha-D-glucopyranoside pocket.

The protein belongs to the acetyltransferase family. MshD subfamily. Monomer.

It carries out the reaction 1D-myo-inositol 2-(L-cysteinylamino)-2-deoxy-alpha-D-glucopyranoside + acetyl-CoA = mycothiol + CoA + H(+). In terms of biological role, catalyzes the transfer of acetyl from acetyl-CoA to desacetylmycothiol (Cys-GlcN-Ins) to form mycothiol. In Streptomyces avermitilis (strain ATCC 31267 / DSM 46492 / JCM 5070 / NBRC 14893 / NCIMB 12804 / NRRL 8165 / MA-4680), this protein is Mycothiol acetyltransferase.